The primary structure comprises 622 residues: Presenilin-A (622 aa).

The span at 1-16 (MKENEDEINKTDEKYK) shows a compositional bias: basic and acidic residues. Disordered regions lie at residues 1-65 (MKEN…NLEN) and 132-160 (VSEQ…DETE). Residues 1–168 (MKENEDEINK…TEVPELVDYS (168 aa)) are Cytoplasmic-facing. Positions 21-62 (SNNGNNKNKNNNNNNNNNNNNNNNNNNNNNNNNNNNNNGNSN) are enriched in low complexity. Acidic residues predominate over residues 147-160 (DLDEDDDDDDDETE). A helical membrane pass occupies residues 169-189 (EMIVSILYPVCITMVIVVLAI). Topologically, residues 190 to 227 (RAISSSTSKNSQIVEISNDNSGGNGDSSSGADKMVFDS) are lumenal. Residues 228 to 248 (VVNSLIFLAVIILSTTIMVVL) traverse the membrane as a helical segment. Residues 249–265 (YKFKLMKALYAWLMGTS) are Cytoplasmic-facing. Residues 266-286 (ILLLGVFGGFLFLILLAYLNL) form a helical membrane-spanning segment. Residues 287-289 (GLD) are Lumenal-facing. Residues 290–310 (YVTFVIVVWNFSVGGIVCIFW) traverse the membrane as a helical segment. A topological domain (cytoplasmic) is located at residue Tyr311. The chain crosses the membrane as a helical span at residues 312–332 (SPKLLNQGYLISISVLMALFF). Over 333 to 341 (SRLPDWTTW) the chain is Lumenal. Residues 342–362 (GILSIVSIYDIFAVLCPGGPL) traverse the membrane as a helical segment. Asp351 is an active-site residue. At 363 to 538 (RILIETAQKR…SYVKPKQSIR (176 aa)) the chain is on the cytoplasmic side. The segment at 419 to 477 (NNNNNEDENKNNTEDGNNNNNKNKNNNNNNNNRIENENGAENSSENGSITPPPTIPNFI) is disordered. Over residues 432–466 (EDGNNNNNKNKNNNNNNNNRIENENGAENSSENGS) the composition is skewed to low complexity. Residues 539–559 (LGLGDFVFYSVLIGKAASYQI) form a helical membrane-spanning segment. Asp543 is a catalytic residue. Topologically, residues 560–562 (TTV) are lumenal. Residues 563–583 (FTVFIAIITGLFLTLILLAVF) form a helical membrane-spanning segment. The Cytoplasmic segment spans residues 584-588 (RRALP). A PAL motif is present at residues 588–590 (PAL). Positions 589 to 609 (ALPMSIIFGIIVFFLTFKILI) form an intramembrane region, helical. At 610–622 (QYIYFLGENQIFV) the chain is on the cytoplasmic side.

The protein belongs to the peptidase A22A family. In terms of assembly, homodimer. Component of the gamma-secretase complex, a complex composed of a presenilin homodimer, nicastrin, aph1 and pen2.

The protein resides in the endoplasmic reticulum membrane. The protein localises to the golgi apparatus membrane. Functionally, probable catalytic subunit of the gamma-secretase complex, an endoprotease complex that catalyzes the intramembrane cleavage of integral membrane proteins such as Notch receptors. Requires the other members of the gamma-secretase complex to have a protease activity. In Dictyostelium discoideum (Social amoeba), this protein is Presenilin-A (psenA).